The primary structure comprises 507 residues: ATP-dependent RNA helicase DDX47 (507 aa).

Acidic residues predominate over residues 1–31 (MSETSEDEQTQLQTSDEEEDLGSEEEQEDED). The tract at residues 1–58 (MSETSEDEQTQLQTSDEEEDLGSEEEQEDEDNNHKEGDSEAALSGEDDKGSEDDAAEE) is disordered. Residues 61–89 (LTWKDLGLNEALCQACDELKWKAPSKIQR) carry the Q motif motif. Residues 92–263 (IPVALQGKDV…RASLKDPVKV (172 aa)) form the Helicase ATP-binding domain. 105 to 112 (AETGSGKT) is a binding site for ATP. The DEAD box motif lies at 211-214 (DEAD). Residues 290–434 (YLVHILNELA…LYKCEEDEVM (145 aa)) enclose the Helicase C-terminal domain. The stretch at 426-453 (YKCEEDEVMALQERVAEAQRTAKLELKD) forms a coiled coil. Residues 451–471 (LKDLEDTRGGHKRGGDTHDDS) are compositionally biased toward basic and acidic residues. The interval 451-507 (LKDLEDTRGGHKRGGDTHDDSENFTGARKRMKPMGGTGGGGRKSFGKKNWSKGKQKR) is disordered. The span at 494-507 (SFGKKNWSKGKQKR) shows a compositional bias: basic residues.

This sequence belongs to the DEAD box helicase family. DDX47/RRP3 subfamily.

The protein resides in the nucleus. The protein localises to the nucleolus. It carries out the reaction ATP + H2O = ADP + phosphate + H(+). Functionally, part of a translational control module, also containing ath/DHX33 and ais/DDX52, which coordinates germline stem cell differentiation with ribosome biogenesis during oogenesis. This module allows for coregulation of ribosomal proteins and non1/GTPBP4, a p53 repressor, preventing p53 stabilization, cell cycle arrest and loss of stem cell differentiation. With atos, adjusts transcription and translation of a subset of OXPHOS genes in macrophages to increase mitochondrial bioenergetics and allow tissue invasion. This chain is ATP-dependent RNA helicase DDX47, found in Drosophila melanogaster (Fruit fly).